We begin with the raw amino-acid sequence, 190 residues long: Selenoprotein S (190 aa).

The helical transmembrane segment at 28-48 threads the bilayer; it reads SLLATYGWYIVFCCILLYVVF. Residues 78–90 form a VCP/p97-interacting motif (VIM) region; the sequence is RQEALAAARLKMQ. Residues 115-138 show a composition bias toward basic and acidic residues; the sequence is KIERWDSVQEGRSYRGDARKRQEE. The tract at residues 115-190 is disordered; sequence KIERWDSVQE…RRGPSSGGUG (76 aa). Ser140 is subject to Phosphoserine. The segment covering 160 to 174 has biased composition (gly residues); that stretch reads RGGGYNPLSGEGGGA. Sec189 is a non-standard amino acid (selenocysteine).

The protein belongs to the selenoprotein S family. Interacts with DERL1 and (via VIM motif) with VCP, suggesting that it forms a membrane complex with DERL1 that serves as a receptor for VCP. Also interacts with DERL2, DERL3 and SELENOK. The SELENOK-SELENOS complex interacts with VCP. In terms of processing, truncated SELENOS proteins produced by failed UGA/Sec decoding are ubiquitinated by the CRL2(KLHDC2) and CRL2(KLHDC3) complexes, which recognizes the glycine (Gly) at the C-terminus of truncated SELENOS proteins. Truncated SELENOS proteins produced by failed UGA/Sec decoding are also ubiquitinated by the CRL5(KLHDC1) complex. In terms of tissue distribution, ubiquitously expressed. Highest expression in liver and lung, with lower levels detected in spleen, kidney, brain, lymph nodes, small intestine, stomach and heart. Very low expression detected in longissimus dorsi.

It localises to the cytoplasm. Its subcellular location is the endoplasmic reticulum membrane. Its function is as follows. Involved in the degradation process of misfolded endoplasmic reticulum (ER) luminal proteins. Participates in the transfer of misfolded proteins from the ER to the cytosol, where they are destroyed by the proteasome in a ubiquitin-dependent manner. Probably acts by serving as a linker between DERL1, which mediates the retrotranslocation of misfolded proteins into the cytosol, and the ATPase complex VCP, which mediates the translocation and ubiquitination. This is Selenoprotein S from Sus scrofa (Pig).